The primary structure comprises 185 residues: Ribosome-recycling factor (185 aa).

This sequence belongs to the RRF family.

It localises to the cytoplasm. Its function is as follows. Responsible for the release of ribosomes from messenger RNA at the termination of protein biosynthesis. May increase the efficiency of translation by recycling ribosomes from one round of translation to another. The protein is Ribosome-recycling factor of Helicobacter hepaticus (strain ATCC 51449 / 3B1).